An 81-amino-acid chain; its full sequence is MAIRRRRRTFHRRKVCRFCVDSELKIDYKDSKTLRYFVTERGKIVPRRISGNCAKHQRELTLAVKRARQIALLPHTTIHNV.

It belongs to the bacterial ribosomal protein bS18 family. In terms of assembly, part of the 30S ribosomal subunit. Forms a tight heterodimer with protein bS6.

Functionally, binds as a heterodimer with protein bS6 to the central domain of the 16S rRNA, where it helps stabilize the platform of the 30S subunit. The polypeptide is Small ribosomal subunit protein bS18 (Syntrophobacter fumaroxidans (strain DSM 10017 / MPOB)).